The primary structure comprises 2098 residues: Unconventional myosin heavy chain 6 (2098 aa).

In terms of domain architecture, Myosin motor spans Q62 to Y732. G155–T162 provides a ligand contact to ATP. Actin-binding stretches follow at residues L609–E631 and Q711–L725. IQ domains follow at residues L735–K757, Q758–R787, and L804–K833. The tract at residues F860–P898 is disordered. In terms of domain architecture, MyTH4 1 spans H929–K1168. The Ras-associating domain occupies K1171–S1211. One can recognise an FERM 1 domain in the interval V1173–S1481. One can recognise an SH3 domain in the interval K1479 to T1547. The MyTH4 2 domain occupies F1624–Q1772. One can recognise an FERM 2 domain in the interval I1778–Q2086.

It belongs to the TRAFAC class myosin-kinesin ATPase superfamily. Myosin family. In terms of assembly, interacts with unc-98.

The protein resides in the cytoplasm. Functionally, myosins are actin-based motor molecules with ATPase activity. Unconventional myosins serve in intracellular movements. Their highly divergent tails are presumed to bind to membranous compartments, which would be moved relative to actin filaments. The protein is Unconventional myosin heavy chain 6 of Caenorhabditis elegans.